The chain runs to 334 residues: Ferredoxin--NADP reductase (334 aa).

FAD-binding residues include Asp33, Gln41, Tyr46, Ala86, Phe120, Asp286, and Thr327.

It belongs to the ferredoxin--NADP reductase type 2 family. In terms of assembly, homodimer. Requires FAD as cofactor.

The enzyme catalyses 2 reduced [2Fe-2S]-[ferredoxin] + NADP(+) + H(+) = 2 oxidized [2Fe-2S]-[ferredoxin] + NADPH. In Rickettsia massiliae (strain Mtu5), this protein is Ferredoxin--NADP reductase.